A 293-amino-acid chain; its full sequence is Phosphoribosylaminoimidazole-succinocarboxamide synthase (293 aa).

This sequence belongs to the SAICAR synthetase family.

The catalysed reaction is 5-amino-1-(5-phospho-D-ribosyl)imidazole-4-carboxylate + L-aspartate + ATP = (2S)-2-[5-amino-1-(5-phospho-beta-D-ribosyl)imidazole-4-carboxamido]succinate + ADP + phosphate + 2 H(+). Its pathway is purine metabolism; IMP biosynthesis via de novo pathway; 5-amino-1-(5-phospho-D-ribosyl)imidazole-4-carboxamide from 5-amino-1-(5-phospho-D-ribosyl)imidazole-4-carboxylate: step 1/2. The chain is Phosphoribosylaminoimidazole-succinocarboxamide synthase from Bordetella petrii (strain ATCC BAA-461 / DSM 12804 / CCUG 43448).